A 70-amino-acid polypeptide reads, in one-letter code: UPF0519 protein D (70 aa).

This sequence belongs to the UPF0519 family.

The protein is UPF0519 protein D of Dictyostelium discoideum (Social amoeba).